Here is a 424-residue protein sequence, read N- to C-terminus: Type II methyltransferase M.BspRI (424 aa).

Residues phenylalanine 58–tyrosine 408 enclose the SAM-dependent MTase C5-type domain. Cysteine 156 serves as the catalytic S-methylcysteine intermediate. Cysteine 181 carries the post-translational modification S-methylcysteine; by autocatalysis.

The protein belongs to the class I-like SAM-binding methyltransferase superfamily. C5-methyltransferase family. As to quaternary structure, monomer. Post-translationally, in the absence of DNA, can self-methylate two cysteine residues.

It carries out the reaction a 2'-deoxycytidine in DNA + S-adenosyl-L-methionine = a 5-methyl-2'-deoxycytidine in DNA + S-adenosyl-L-homocysteine + H(+). Its function is as follows. A methylase, recognizes the double-stranded sequence 5'-GGCC-3', methylates C-3 on both strands, and protects the DNA from cleavage by the BspRI endonuclease. In Lysinibacillus sphaericus (Bacillus sphaericus), this protein is Type II methyltransferase M.BspRI (bspRIM).